Consider the following 166-residue polypeptide: Cyclic pyranopterin monophosphate synthase (166 aa).

Substrate contacts are provided by residues 75–77 (LCH) and 113–114 (ME). Residue D128 is part of the active site.

It belongs to the MoaC family. Homohexamer; trimer of dimers.

The catalysed reaction is (8S)-3',8-cyclo-7,8-dihydroguanosine 5'-triphosphate = cyclic pyranopterin phosphate + diphosphate. It functions in the pathway cofactor biosynthesis; molybdopterin biosynthesis. In terms of biological role, catalyzes the conversion of (8S)-3',8-cyclo-7,8-dihydroguanosine 5'-triphosphate to cyclic pyranopterin monophosphate (cPMP). In Thermomicrobium roseum (strain ATCC 27502 / DSM 5159 / P-2), this protein is Cyclic pyranopterin monophosphate synthase.